Here is a 284-residue protein sequence, read N- to C-terminus: Shikimate dehydrogenase (NADP(+)) (284 aa).

Residues Ser19–Ser21 and Thr66 each bind shikimate. The Proton acceptor role is filled by Lys70. Asp82 is a binding site for NADP(+). Residues Asn91 and Asp106 each contribute to the shikimate site. NADP(+) is bound by residues Gly130–Ser134 and Ile226. Tyr228 serves as a coordination point for shikimate. Residue Gly249 participates in NADP(+) binding.

This sequence belongs to the shikimate dehydrogenase family. In terms of assembly, homodimer.

It carries out the reaction shikimate + NADP(+) = 3-dehydroshikimate + NADPH + H(+). It participates in metabolic intermediate biosynthesis; chorismate biosynthesis; chorismate from D-erythrose 4-phosphate and phosphoenolpyruvate: step 4/7. Its function is as follows. Involved in the biosynthesis of the chorismate, which leads to the biosynthesis of aromatic amino acids. Catalyzes the reversible NADPH linked reduction of 3-dehydroshikimate (DHSA) to yield shikimate (SA). This Methanococcus vannielii (strain ATCC 35089 / DSM 1224 / JCM 13029 / OCM 148 / SB) protein is Shikimate dehydrogenase (NADP(+)).